The primary structure comprises 1807 residues: Atrochrysone carboxylic acid synthase Agnpks1 (1807 aa).

The N-terminal acylcarrier protein transacylase domain (SAT) stretch occupies residues L41–A173. The Ketosynthase family 3 (KS3) domain maps to Q411–E845. Catalysis depends on for beta-ketoacyl synthase activity residues C584, H720, and H763. A malonyl-CoA:ACP transacylase (MAT) domain region spans residues F946–V1265. Residues T1334–A1653 are product template (PT) domain. The interval H1338–E1473 is N-terminal hotdog fold. The PKS/mFAS DH domain maps to H1338–S1648. The active-site Proton acceptor; for dehydratase activity is H1370. The segment at V1500–S1648 is C-terminal hotdog fold. The active-site Proton donor; for dehydratase activity is the D1559. The Carrier domain maps to D1732 to Y1806. S1766 is modified (O-(pantetheine 4'-phosphoryl)serine).

The enzyme catalyses holo-[ACP] + 8 malonyl-CoA + 8 H(+) = atrochrysone carboxyl-[ACP] + 8 CO2 + 8 CoA + 2 H2O. It functions in the pathway secondary metabolite biosynthesis. In terms of biological role, non-reducing polyketide synthase; part of the gene cluster that mediates the biosynthesis of agnestins, dihydroxy-xanthone metabolites. The pathway begins with the assembly and cyclization of atrochrysone thioester by the non-reducing polyketide synthase Agnpks1. The atrochrysone carboxyl ACP thioesterase AgnL7 then breaks the thioester bond and releases the atrochrysone carboxylic acid as the first enzyme-free intermediate. The decarboxylase AgnL1 then catalyzes the concerted decarboxylation-elimination required to convert atochrysone carboxylic acid into emodin anthrone, which is further oxidized to emodin by the anthrone oxygenase AgnL2. Emodin then undergoes reduction catalyzed by the oxidoreductase AgnL4 to yield the dihydroquinone tautomer which is the substrate for reduction by the short chain dehydrogenase AgnL6 reduction to produce hydroxyketone, followed by AgnL8 dehydration and likely spontaneous autoxidation to chrysophanol. Baeyer-Villiger oxidation by the oxidase AgnL3 leads to monodictyphenone via cleavage of the C-10/C-10a bond of chrysophanol. Alternative cleavage at the C-4a/C-10 bond of chrysophanol also leads to the formation some cephalone F. Further conversion to agnestins A and B, requires reduction to dihydro-monodictyphenone, oxidation to agnestin C probably via an epoxide, and rearrangement to either agnestin A or agnestin B directly, although agnestin A or agnestin B can also interconvert. Within the cluster, AgnR1 is the only unassigned oxidoreductase present which could be involved in this conversion. However, AgnR1 seems not to be involved in this step, and thus genes involved in the proposed oxidation/reduction may be located elsewhere on the genome. Further agnestin A derivatives are probably formed by spontaneous decarboxylations, dehydrations and methanolysis reactions. The sequence is that of Atrochrysone carboxylic acid synthase Agnpks1 from Paecilomyces divaricatus (Penicillium divaricatum).